The sequence spans 295 residues: Very long chain fatty acid elongase 5 (295 aa).

The next 7 membrane-spanning stretches (helical) occupy residues 26 to 46 (WLLLDNYVPTIFFTALYLFIV), 64 to 84 (ILVVYNLGLTLLSFYMFYELV), 112 to 132 (VLWWYYFSKLIEFMDTFFFIL), 150 to 170 (MLNIWWFVMNWVPCGHSFFGA), 172 to 192 (LNSFIHVLMYSYYGLSAIPAI), 207 to 223 (LTQFVLTMTQTTCAMIW), and 227 to 247 (FPMGWLYFQNSYMISLIILFT). The segment at 265–295 (YQNGSASAVNGYTNSFSSLEDNVKQRKQRQN) is disordered. The segment covering 266–284 (QNGSASAVNGYTNSFSSLE) has biased composition (polar residues).

Belongs to the ELO family. ELOVL5 subfamily.

It localises to the endoplasmic reticulum membrane. The protein resides in the cell projection. It is found in the dendrite. It carries out the reaction a very-long-chain acyl-CoA + malonyl-CoA + H(+) = a very-long-chain 3-oxoacyl-CoA + CO2 + CoA. It catalyses the reaction (6Z,9Z,12Z)-octadecatrienoyl-CoA + malonyl-CoA + H(+) = (8Z,11Z,14Z)-3-oxoeicosatrienoyl-CoA + CO2 + CoA. The catalysed reaction is (9Z,12Z,15Z)-octadecatrienoyl-CoA + malonyl-CoA + H(+) = (11Z,14Z,17Z)-3-oxoeicosatrienoyl-CoA + CO2 + CoA. The enzyme catalyses (9Z)-hexadecenoyl-CoA + malonyl-CoA + H(+) = 3-oxo-(11Z)-octadecenoyl-CoA + CO2 + CoA. It carries out the reaction (9Z)-octadecenoyl-CoA + malonyl-CoA + H(+) = 3-oxo-(11Z)-eicosenoyl-CoA + CO2 + CoA. It catalyses the reaction (11Z)-octadecenoyl-CoA + malonyl-CoA + H(+) = 3-oxo-(13Z)-eicosenoyl-CoA + CO2 + CoA. The catalysed reaction is (9Z,12Z)-octadecadienoyl-CoA + malonyl-CoA + H(+) = (11Z,14Z)-3-oxoicosa-11,14-dienoyl-CoA + CO2 + CoA. The enzyme catalyses (6Z,9Z,12Z,15Z)-octadecatetraenoyl-CoA + malonyl-CoA + H(+) = (8Z,11Z,14Z,17Z)-3-oxoicosatetraenoyl-CoA + CO2 + CoA. It carries out the reaction (5Z,8Z,11Z,14Z)-eicosatetraenoyl-CoA + malonyl-CoA + H(+) = (7Z,10Z,13Z,16Z)-3-oxodocosatetraenoyl-CoA + CO2 + CoA. It catalyses the reaction (5Z,8Z,11Z,14Z,17Z)-eicosapentaenoyl-CoA + malonyl-CoA + H(+) = 3-oxo-(7Z,10Z,13Z,16Z,19Z)-docosapentaenoyl-CoA + CO2 + CoA. Its pathway is lipid metabolism; polyunsaturated fatty acid biosynthesis. Catalyzes the first and rate-limiting reaction of the four reactions that constitute the long-chain fatty acids elongation cycle. This endoplasmic reticulum-bound enzymatic process allows the addition of 2 carbons to the chain of long- and very long-chain fatty acids (VLCFAs) per cycle. Condensing enzyme that acts specifically toward polyunsaturated acyl-CoA with the higher activity toward C18:3(n-6) acyl-CoA. May participate in the production of monounsaturated and of polyunsaturated VLCFAs of different chain lengths that are involved in multiple biological processes as precursors of membrane lipids and lipid mediators. In conditions where the essential linoleic and alpha linoleic fatty acids are lacking it is also involved in the synthesis of Mead acid from oleic acid. This chain is Very long chain fatty acid elongase 5, found in Xenopus laevis (African clawed frog).